Reading from the N-terminus, the 364-residue chain is RNA polymerase sigma factor SigA (364 aa).

The tract at residues 132-202 (LAEANLRLVV…TRAIADQART (71 aa)) is sigma-70 factor domain-2. An Interaction with polymerase core subunit RpoC motif is present at residues 156-159 (DLIQ). The interval 211–287 (ETINKLIRVQ…DDVIESPVDY (77 aa)) is sigma-70 factor domain-3. Positions 300–353 (VMDTLTDREENVLRMRFGLDDGRMHTLEDVGKQFKVTRERIRQIEAKAIKKLRH) are sigma-70 factor domain-4. Residues 326-345 (LEDVGKQFKVTRERIRQIEA) constitute a DNA-binding region (H-T-H motif).

The protein belongs to the sigma-70 factor family. RpoD/SigA subfamily. As to quaternary structure, interacts transiently with the RNA polymerase catalytic core.

It localises to the cytoplasm. Functionally, sigma factors are initiation factors that promote the attachment of RNA polymerase to specific initiation sites and are then released. This sigma factor is the primary sigma factor during exponential growth. In Lactococcus lactis subsp. cremoris (Streptococcus cremoris), this protein is RNA polymerase sigma factor SigA.